The chain runs to 994 residues: Integrator complex subunit 5 (994 aa).

A disordered region spans residues 559-586 (NSNNNNELCNGKDYGKRTKLEPGEDKVD). Residues 571 to 583 (DYGKRTKLEPGED) show a composition bias toward basic and acidic residues. A run of 2 helical transmembrane segments spans residues 769-786 (YSLV…DVMY) and 810-826 (AFIN…LIAG).

The protein belongs to the Integrator subunit 5 family. As to quaternary structure, belongs to the multiprotein complex Integrator, at least composed of IntS1, IntS2, IntS3, IntS4, omd/IntS5, IntS6, defl/IntS7, IntS8, IntS9, IntS10, IntS11, IntS12, asun/IntS13, IntS14 and IntS15. The core complex associates with protein phosphatase 2A subunits mts/PP2A and Pp2A-29B, to form the Integrator-PP2A (INTAC) complex.

The protein resides in the nucleus membrane. Its subcellular location is the nucleus. It localises to the cytoplasm. In terms of biological role, component of the integrator complex, a multiprotein complex that terminates RNA polymerase II (Pol II) transcription in the promoter-proximal region of genes. The integrator complex provides a quality checkpoint during transcription elongation by driving premature transcription termination of transcripts that are unfavorably configured for transcriptional elongation: the complex terminates transcription by (1) catalyzing dephosphorylation of the C-terminal domain (CTD) of Pol II subunit Polr2A/Rbp1 and Spt5, and (2) degrading the exiting nascent RNA transcript via endonuclease activity. The integrator complex is also involved in the 3'-end processing of the U7 snRNA, and also the spliceosomal snRNAs U1, U2, U4 and U5. The protein is Integrator complex subunit 5 of Drosophila melanogaster (Fruit fly).